A 579-amino-acid polypeptide reads, in one-letter code: Probable N-acetylgalactosaminyltransferase 9 (579 aa).

Over 1 to 12 (MLRYIIPRKKGT) the chain is Cytoplasmic. The chain crosses the membrane as a helical; Signal-anchor for type II membrane protein span at residues 13–30 (FVIAAFLTVAFFCIVAYH). The Lumenal segment spans residues 31-579 (RNDRRRTKFQ…KWNFIDPAKA (549 aa)). A glycan (N-linked (GlcNAc...) asparagine) is linked at asparagine 67. Disulfide bonds link cysteine 123/cysteine 356, cysteine 347/cysteine 427, cysteine 464/cysteine 483, cysteine 507/cysteine 520, and cysteine 545/cysteine 562. Positions 133 to 243 (LPKTSVIIIF…HGWLEPIVQR (111 aa)) are catalytic subdomain A. 2 residues coordinate substrate: aspartate 174 and arginine 204. Residue aspartate 227 participates in Mn(2+) binding. Serine 228 serves as a coordination point for substrate. Mn(2+) is bound at residue histidine 229. Residues 302-364 (YIRSPTMAGG…PCSHVGHIFR (63 aa)) form a catalytic subdomain B region. Tryptophan 333 contacts substrate. Histidine 361 lines the Mn(2+) pocket. Arginine 364, histidine 367, and tyrosine 369 together coordinate substrate. N-linked (GlcNAc...) asparagine glycosylation occurs at asparagine 370. Positions 450–574 (AYGALHTVVS…KDEHQKWNFI (125 aa)) constitute a Ricin B-type lectin domain.

The protein belongs to the glycosyltransferase 2 family. GalNAc-T subfamily. The cofactor is Mn(2+).

The protein localises to the golgi apparatus membrane. It functions in the pathway protein modification; protein glycosylation. Functionally, probable glycopeptide transferase involved in O-linked oligosaccharide biosynthesis. Glycopeptide transferases catalyze the transfer of an N-acetyl-D-galactosamine residue to an already glycosylated peptide. In contrast to other members of the family, it does not act as a peptide transferase that transfers GalNAc onto serine or threonine residue on peptides that have been tested. Some peptide transferase activity is however not excluded, considering that its appropriate peptide substrate may remain unidentified. This is Probable N-acetylgalactosaminyltransferase 9 (gly-9) from Caenorhabditis elegans.